The chain runs to 268 residues: Centromere protein Q (268 aa).

Residues 1–31 (MSGKANASKKNFEQLKRNPKRKKDNEEVVLS) form a disordered region. A Phosphoserine modification is found at Ser31. A coiled-coil region spans residues 170–203 (ELMTGNIQSLKNKIQILASEVEEEEERVKQIHQI). Ser249 bears the Phosphoserine mark.

It belongs to the CENP-Q/OKP1 family. In terms of assembly, component of the CENPA-CAD complex, composed of CENPI, CENPK, CENPL, CENPO, CENPP, CENPQ, CENPR and CENPS. The CENPA-CAD complex interacts with the CENPA-NAC complex, at least composed of CENPA, CENPC, CENPH, CENPM, CENPN, CENPT and CENPU.

It is found in the nucleus. The protein resides in the chromosome. Its subcellular location is the centromere. Its function is as follows. Component of the CENPA-CAD (nucleosome distal) complex, a complex recruited to centromeres which is involved in assembly of kinetochore proteins, mitotic progression and chromosome segregation. May be involved in incorporation of newly synthesized CENPA into centromeres via its interaction with the CENPA-NAC complex. Plays an important role in chromosome congression and in the recruitment of CENP-O complex (which comprises CENPO, CENPP, CENPQ and CENPU), CENPE and PLK1 to the kinetochores. This is Centromere protein Q (CENPQ) from Macaca fascicularis (Crab-eating macaque).